We begin with the raw amino-acid sequence, 89 residues long: Large ribosomal subunit protein bL27 (89 aa).

The disordered stretch occupies residues 1–22 (MAHKKGTGSTRNGRDSNAQRLG). A compositionally biased stretch (polar residues) spans 7–19 (TGSTRNGRDSNAQ).

It belongs to the bacterial ribosomal protein bL27 family.

The polypeptide is Large ribosomal subunit protein bL27 (Cyanothece sp. (strain PCC 7425 / ATCC 29141)).